Here is a 383-residue protein sequence, read N- to C-terminus: Probable lipid transporter atnI (383 aa).

2 consecutive transmembrane segments (helical) span residues 46-66 and 71-91; these read VLFSVLFGLTTIIHIVQAIMF and AWVVIMSSLWELIAFIMRSLF. N94 carries N-linked (GlcNAc...) asparagine glycosylation. The next 5 membrane-spanning stretches (helical) occupy residues 104–124, 144–164, 182–202, 231–251, and 269–289; these read FTIFFLLAPIWVNAFLYMTLG, FGHIFVWLEILAFIIQLVGAA, IYMGGIGVQELFILIFTGLFI, WLFYAIYASLFLITVRIIFRL, and WFEYVWDAAPIFICLAILNVA. The interval 305 to 383 is disordered; that stretch reads VSRKEKKQRK…YDNRGNEVRP (79 aa). The segment covering 307–316 has biased composition (basic residues); the sequence is RKEKKQRKRE. Positions 317–329 are enriched in basic and acidic residues; it reads KKEAKIAEKEAKK.

The protein belongs to the lipid-translocating exporter (LTE) (TC 9.A.26.1) family.

It is found in the membrane. The protein operates within secondary metabolite biosynthesis. In terms of biological role, probable lipid transporter; part of the gene cluster that mediates the biosynthesis of aspercryptins, linear lipopeptides built from six amino acids including 2 highly unusual and nonproteogenic amino acids, 2-amino-octanoic acid (2aoa) and 2-amino-dodecanol (2adol). The core structure of aspercryptins is as follows: Ser/Ala-Thr-Ile/Val-2aoa-Asn-2adol. The first step of aspercryptin biosynthesis is the generation of the fatty acid precursors, octanoic and dodecanoic acids, by the FAS subunits atnF and atnM. The fatty acid precursors are likely transformed into the corresponding alpha-amino fatty acids in three steps. First, they are hydroxylated by the cytochrome P450 monooxygenase atnE, then oxidized to the corresponding alpha-keto acids by the NAD(P)-dependent oxidoreductase atnD, and finally converted to the alpha-amino fatty acids by the PLP-dependent aminotransferases atnH or atnJ. the alpha-amino fatty acids, 2-amino-octanoic and 2-amino-dodecanoic acids, are recognized, activated, and covalently tethered to the NRPS atnA by its fourth and sixth adenylation domains. The second module of atnA is the Thr module and contains an epimerase (E) domain responsible for the epimerization of Thr to D-allo-Thr. Additionally, despite atnA having only one epimerase domain, the first amino acid of aspercryptin A1 is D-Ser, suggesting that serine is either loaded directly as D-Ser on the first module or that the epimerase domain in the threonine module epimerizes both L-Ser and L-Thr. After condensation of the hexapeptide of aspercryptin, the C-terminal reductase (TE) domain might be involved in the reductive release and production of the aldehyde hexapeptide. Further reduction would generate aspercryptins. The variety of aspercryptins produced reflects the flexibility of the atnA NRPS, allowing incorporation of alanine instead of serine, valine for isoleucine, and a C10 fatty amino alcohol instead of the C12 version. AtnB seems to be involved in the selectivity for Ile versus Val by the third module. Moreover, type B, C and D aspercryptins have an additional N-terminal cichorine, acetyl and propionyl group respectively. The protein is Probable lipid transporter atnI of Emericella nidulans (strain FGSC A4 / ATCC 38163 / CBS 112.46 / NRRL 194 / M139) (Aspergillus nidulans).